The primary structure comprises 207 residues: Ribonuclease HII (207 aa).

One can recognise an RNase H type-2 domain in the interval 12 to 201 (DLVAGVDEVG…VRAAWEAREG (190 aa)). The a divalent metal cation site is built by Asp18, Glu19, and Asp110.

This sequence belongs to the RNase HII family. The cofactor is Mn(2+). It depends on Mg(2+) as a cofactor.

The protein resides in the cytoplasm. The enzyme catalyses Endonucleolytic cleavage to 5'-phosphomonoester.. Its function is as follows. Endonuclease that specifically degrades the RNA of RNA-DNA hybrids. This chain is Ribonuclease HII, found in Pseudomonas putida (strain W619).